The sequence spans 798 residues: Exo-1,4-beta-xylosidase xlnD (798 aa).

The signal sequence occupies residues 1–20 (MPGAASIVAVLAALLPTALG). 4 N-linked (GlcNAc...) asparagine glycosylation sites follow: Asn23, Asn87, Asn142, and Asn237. Residue Asp310 is part of the active site. N-linked (GlcNAc...) asparagine glycans are attached at residues Asn326, Asn391, Asn404, Asn443, Asn480, Asn522, Asn618, Asn645, Asn658, Asn685, and Asn707.

The protein belongs to the glycosyl hydrolase 3 family.

The protein resides in the secreted. The catalysed reaction is Hydrolysis of (1-&gt;4)-beta-D-xylans, to remove successive D-xylose residues from the non-reducing termini.. It functions in the pathway glycan degradation; xylan degradation. Its function is as follows. Xylan 1,4-beta-xylosidase involved in the hydrolysis of xylan, a major structural heterogeneous polysaccharide found in plant biomass representing the second most abundant polysaccharide in the biosphere, after cellulose. In Aspergillus oryzae (strain ATCC 42149 / RIB 40) (Yellow koji mold), this protein is Exo-1,4-beta-xylosidase xlnD (xlnD).